The chain runs to 219 residues: Melanoma-associated antigen H1 (219 aa).

The segment covering 1 to 13 (MPRGRKSRRRRNA) has biased composition (basic residues). Residues 1 to 84 (MPRGRKSRRR…QKPSVPRSNF (84 aa)) are disordered. One can recognise an MAGE domain in the interval 1 to 198 (MPRGRKSRRR…KDWPCNYDWD (198 aa)). Acidic residues predominate over residues 44-57 (PEDDLSGPEEDPST). The segment covering 58 to 74 (PEEASTTPEEASSTAQA) has biased composition (low complexity). Position 195 is a phosphotyrosine (tyrosine 195).

This is Melanoma-associated antigen H1 (MAGEH1) from Homo sapiens (Human).